Reading from the N-terminus, the 422-residue chain is 5'-deoxyadenosine deaminase (422 aa).

The Zn(2+) site is built by His-57 and His-59. Residues Glu-86 and His-178 each contribute to the substrate site. His-205 is a binding site for Zn(2+). Positions 208 and 294 each coordinate substrate. Asp-294 lines the Zn(2+) pocket.

This sequence belongs to the metallo-dependent hydrolases superfamily. MTA/SAH deaminase family. Homotetramer. The cofactor is Zn(2+).

It catalyses the reaction 5'-deoxyadenosine + H2O + H(+) = 5'-deoxyinosine + NH4(+). It carries out the reaction S-adenosyl-L-homocysteine + H2O + H(+) = S-inosyl-L-homocysteine + NH4(+). The catalysed reaction is S-methyl-5'-thioadenosine + H2O + H(+) = S-methyl-5'-thioinosine + NH4(+). The enzyme catalyses adenosine + H2O + H(+) = inosine + NH4(+). It participates in amino-acid biosynthesis; S-adenosyl-L-methionine biosynthesis. In terms of biological role, catalyzes the deamination of three SAM-derived enzymatic products, namely 5'-deoxyadenosine, S-adenosyl-L-homocysteine, and 5'-methylthioadenosine, to produce the inosine analogs. Can also deaminate adenosine. The preferred substrate for this enzyme is 5'-deoxyadenosine, but all these substrates are efficiently deaminated. Likely functions in a S-adenosyl-L-methionine (SAM) recycling pathway from S-adenosyl-L-homocysteine (SAH) produced from SAM-dependent methylation reactions. May also be involved in the recycling of 5'-deoxyadenosine, whereupon the 5'-deoxyribose moiety of 5'-deoxyinosine is further metabolized to deoxyhexoses used for the biosynthesis of aromatic amino acids in methanogens. In Methanococcus maripaludis (strain C7 / ATCC BAA-1331), this protein is 5'-deoxyadenosine deaminase.